Here is a 395-residue protein sequence, read N- to C-terminus: Elongation factor Tu (395 aa).

Residues K10–E204 form the tr-type G domain. The G1 stretch occupies residues G19 to T26. G19–T26 serves as a coordination point for GTP. A Mg(2+)-binding site is contributed by T26. Residues G60–N64 are G2. The tract at residues D81–G84 is G3. GTP-binding positions include D81–H85 and N136–D139. The tract at residues N136–D139 is G4. The segment at S174 to L176 is G5.

It belongs to the TRAFAC class translation factor GTPase superfamily. Classic translation factor GTPase family. EF-Tu/EF-1A subfamily. Monomer.

It localises to the cytoplasm. It carries out the reaction GTP + H2O = GDP + phosphate + H(+). GTP hydrolase that promotes the GTP-dependent binding of aminoacyl-tRNA to the A-site of ribosomes during protein biosynthesis. In Lysinibacillus sphaericus (strain C3-41), this protein is Elongation factor Tu.